The primary structure comprises 136 residues: Large ribosomal subunit protein uL16 (136 aa).

It belongs to the universal ribosomal protein uL16 family. In terms of assembly, part of the 50S ribosomal subunit.

In terms of biological role, binds 23S rRNA and is also seen to make contacts with the A and possibly P site tRNAs. This is Large ribosomal subunit protein uL16 from Shewanella pealeana (strain ATCC 700345 / ANG-SQ1).